Reading from the N-terminus, the 396-residue chain is Elongation factor Tu (396 aa).

Positions 10–205 constitute a tr-type G domain; that stretch reads KPHVNIGTIG…AVDESIPDPV (196 aa). The segment at 19 to 26 is G1; it reads GHVDHGKT. Residue 19–26 participates in GTP binding; it reads GHVDHGKT. Thr-26 contributes to the Mg(2+) binding site. Residues 62 to 66 are G2; sequence GITIN. A G3 region spans residues 83-86; the sequence is DAPG. GTP is bound by residues 83 to 87 and 138 to 141; these read DAPGH and NKAD. The tract at residues 138–141 is G4; it reads NKAD. The G5 stretch occupies residues 175 to 177; the sequence is SGL.

The protein belongs to the TRAFAC class translation factor GTPase superfamily. Classic translation factor GTPase family. EF-Tu/EF-1A subfamily. Monomer.

The protein localises to the cytoplasm. The catalysed reaction is GTP + H2O = GDP + phosphate + H(+). In terms of biological role, GTP hydrolase that promotes the GTP-dependent binding of aminoacyl-tRNA to the A-site of ribosomes during protein biosynthesis. The chain is Elongation factor Tu from Nocardia farcinica (strain IFM 10152).